We begin with the raw amino-acid sequence, 510 residues long: GTPase Der (510 aa).

EngA-type G domains follow at residues 4-168 and 222-395; these read PVVA…AEKM and IKIA…ACAT. GTP is bound by residues 10–17, 57–61, 120–123, 228–235, 275–279, and 340–343; these read GRPNVGKS, DTGGI, NKTD, DTAGV, and NKWD. The region spanning 396–480 is the KH-like domain; sequence QKMTTSMLTR…PIRLLFQEGN (85 aa).

This sequence belongs to the TRAFAC class TrmE-Era-EngA-EngB-Septin-like GTPase superfamily. EngA (Der) GTPase family. Associates with the 50S ribosomal subunit.

In terms of biological role, GTPase that plays an essential role in the late steps of ribosome biogenesis. This Pasteurella multocida (strain Pm70) protein is GTPase Der.